The sequence spans 430 residues: MEQHIYLIGMNHRTASIDVRECFALTEHCSKDDWAIPLIKGIQESLILSTCNRVEILAVGDSNTPEIILSAWAKVKTRSIEELVPHTYTYQGRSAISHLFCVASSLDSMVLGEPQILGQLKDAYKLATIAGASKTILNRLLHKAFSVAKRVRTETSIASNAVSISYAAVKLAKKIFGTMNQYKAMLIGAGEMAELAAMHLMQAGIQQLKIVNRTYSQAQELASQFRGEAIPFEKLVTYLAEVDIVISSTGAPQTIIHFNDIKNILSKRKHYPMLFIDIAVPRDIDPNVHQLDNIYLYDIDDLKEIVEDNIVQRQDEAIKAKHIIQDEIDSFCAWLQALILQPTIVDLRKRFSTYAEEELERTLKKIGPVDRKTREALETMIDALIRKLTHDPISYLKCAHRTIDTNHITLARQMFNLDKIPQTNKAVNED.

Substrate is bound by residues 50–53, Ser108, 113–115, and Gln119; these read TCNR and EPQ. The active-site Nucleophile is the Cys51. Position 188–193 (188–193) interacts with NADP(+); it reads GAGEMA.

The protein belongs to the glutamyl-tRNA reductase family. Homodimer.

It catalyses the reaction (S)-4-amino-5-oxopentanoate + tRNA(Glu) + NADP(+) = L-glutamyl-tRNA(Glu) + NADPH + H(+). Its pathway is porphyrin-containing compound metabolism; protoporphyrin-IX biosynthesis; 5-aminolevulinate from L-glutamyl-tRNA(Glu): step 1/2. Catalyzes the NADPH-dependent reduction of glutamyl-tRNA(Glu) to glutamate 1-semialdehyde (GSA). The sequence is that of Glutamyl-tRNA reductase from Lawsonia intracellularis (strain PHE/MN1-00).